Here is a 1493-residue protein sequence, read N- to C-terminus: Protein RNA-directed DNA methylation 3 (1493 aa).

Disordered regions lie at residues 1-34 (MDRK…EGLR) and 54-96 (GYYG…SSFV). The short motif at 21–28 (KRKNSVEF) is the Nuclear localization signal element. Positions 24-34 (NSVEFRDEGLR) are enriched in basic and acidic residues. Residues 60-80 (SDEDDDGLGFLNDMEDEPEVE) are compositionally biased toward acidic residues. The segment covering 81-92 (ESSKAGKGEKGK) has biased composition (basic and acidic residues). Residues 239 to 266 (KVSEGTWARVKNGKYKGDLAQIVAVSDT) form the KOW 1 domain. The disordered stretch occupies residues 393–432 (PTCREGGKGEGSGGGKGEGSGGGKGEGSRGGKGEGSSDFK). The span at 401–417 (GEGSGGGKGEGSGGGKG) shows a compositional bias: gly residues. The span at 418-432 (EGSRGGKGEGSSDFK) shows a compositional bias: basic and acidic residues. One can recognise a KOW 2 domain in the interval 501–528 (QISVNDVVKISKGPSEGKQGVVRQVYRG). The interval 578–602 (SSPKSPLSPEKEWQPRERYNSSNQG) is disordered. The segment covering 586–596 (PEKEWQPRERY) has biased composition (basic and acidic residues). Residues 607-634 (TYSIGQKLRIRVGPLKGYLCRVIALRYS) enclose the KOW 3 domain. Disordered regions lie at residues 692–711 (IGAG…PSTD), 728–747 (EKNP…TVAD), and 757–1493 (AAEN…KTGW). Repeat unit 1 spans residues 732–741 (WGGSKPTSDV). The interval 732–1493 (WGGSKPTSDV…WGTGDKKTGW (762 aa)) is 42 X 9 AA approximate WG/GW-rich tandem repeats. Residues 757-767 (AAENKPASASD) are compositionally biased toward low complexity. 37 tandem repeats follow at residues 775–784 (WGKTPASEAG), 789–797 (WGDTSASNV), 818–827 (WGTHGGSSGG), 836–845 (WGKLCEASES), 854–863 (WGKKGGSDGE), 866–875 (WGNKDGNSSA), 883–892 (WGQQDKGSDE), 917–926 (GWNKSAEDSN), 935–943 (WGQPNDGSS), 944–953 (WGKKGDGAAS), 954–962 (WGKKDDGGS), 963–972 (WGKKDDGNKD), 978–987 (WGKKDDGQKD), 1003–1012 (WGKKDDGGSS), 1013–1022 (WGKKDDGGSL), 1023–1032 (WGKKDDGGSS), 1033–1042 (WGKEDDGGSL), 1043–1052 (WGKKDDGESS), 1053–1062 (WGKKDDGESS), 1063–1072 (WGKKDDGGSS), 1073–1082 (WGKKDEGGYS), 1132–1141 (WGKQDGDGGG), 1144–1153 (WGKENDAGGG), 1156–1165 (WGKQDNGVGS), 1167–1176 (WGKQNDGSGG), 1180–1189 (WGKQNDAGGG), 1192–1201 (WGKQDSGGDG), 1204–1213 (WGKQDGGGDS), 1217–1226 (WGKQNNTSGG), 1229–1238 (WGKQSDAGGG), 1241–1250 (WGKQDGGGGG), 1253–1262 (WGKQDGGGGS), 1266–1275 (WGKQNETSNG), 1278–1287 (WGKQNDSGGG), 1290–1299 (WGKQDGGGGG), 1302–1311 (WGKQNDGGGG), and 1314–1323 (WGKQGDGGSK). Over residues 790 to 812 (GDTSASNVEASSWEKQGASTSNV) the composition is skewed to polar residues. Residues 846-860 (SQKKEESSWGKKGGS) show a composition bias toward basic and acidic residues. The span at 866–875 (WGNKDGNSSA) shows a compositional bias: polar residues. Residues 955–1090 (GKKDDGGSWG…YSEQTFDRGG (136 aa)) show a composition bias toward basic and acidic residues. Residues 1122-1134 (PWSKPSGGSSWGK) are compositionally biased toward low complexity. Positions 1156–1172 (WGKQDNGVGSSWGKQND) are enriched in polar residues. A compositionally biased stretch (gly residues) spans 1186–1213 (AGGGSSWGKQDSGGDGSSWGKQDGGGDS). Residues 1218-1231 (GKQNNTSGGSSWGK) are compositionally biased toward polar residues. Positions 1235-1264 (AGGGSSWGKQDGGGGGSSWGKQDGGGGSGS) are enriched in gly residues. A compositionally biased stretch (polar residues) spans 1270 to 1283 (NETSNGSSWGKQND). The segment covering 1284–1321 (SGGGSSWGKQDGGGGGSSWGKQNDGGGGSSWGKQGDGG) has biased composition (gly residues). 2 stretches are compositionally biased toward polar residues: residues 1366–1382 (WKTD…QSGG) and 1392–1401 (DSNNSKPSGS). Copy 39 of the repeat occupies 1389-1398 (WGEDSNNSKP). Residues 1416–1430 (NSKKETNDKPGDDSK) show a composition bias toward basic and acidic residues. Over residues 1432–1442 (AWGTSNDQVNT) the composition is skewed to polar residues. 3 consecutive repeat copies span residues 1433 to 1442 (WGTSNDQVNT), 1467 to 1475 (WGGKTNAVA), and 1484 to 1493 (WGTGDKKTGW).

Interacts with AGO4 via its C-terminal region and with RNA transcripts. Binds chromatin at loci subject to transcriptional silencing downstream of RNA Polymerase V, but independently from the presence of 24-nt siRNA.

The protein resides in the nucleus. It localises to the nucleoplasm. Effector of RNA-directed DNA methylation (RdDM) triggered by small interfering RNAs (siRNAs, 24-nt RNAs). Functions as an adapter protein that binds scaffold transcripts generated by polymerase V and recruits AGO4 and AGO4-bound siRNAs to form an RdDM effector complex. Promotes the expression of 24-nt RNAs. Required for the initial establishment of DNA methylation. Together with AGO4, required for transcriptional gene silencing (TGS) by DNA methylation and repressive histone modifications (H3K9me2) of several chromatin loci. The polypeptide is Protein RNA-directed DNA methylation 3 (Arabidopsis thaliana (Mouse-ear cress)).